Consider the following 81-residue polypeptide: Large ribosomal subunit protein bL31B (81 aa).

This sequence belongs to the bacterial ribosomal protein bL31 family. Type B subfamily. As to quaternary structure, part of the 50S ribosomal subunit.

The sequence is that of Large ribosomal subunit protein bL31B from Bacillus anthracis (strain A0248).